The primary structure comprises 355 residues: MPVWVASAARAALRALLGHPFEPNQQVVQPDGGEPLLVPVRSAARLSDDQALAISRCDPGPGLDLTRDLEIWVRVAWTPSADQGLVLMPGEGVGRIGAGGDACLSTYARQLLECTLLPLLPPGQGLEVEPVLPRGRSLAERTSNAAFGVVDGLALIGTQAEVQQSAAPEQLEQVLRELRALVADPGFGGSVALVIGENGLDLARRAGLSPLLKVGNWLGPVLVAAAEAGVKDLLLLGYHGKLIKLAGGIFHTHHHLADGRLEVLTALGLDVGLSLEELRHLRAAASVEDAFQRLNPETAMDLGRLLAATVEQRSQAYIARYGDWSLRIAAVLFDRSRTLRWRGPMAEERFFTLQD.

This sequence belongs to the CbiD family.

It carries out the reaction Co-precorrin-5B + S-adenosyl-L-methionine = Co-precorrin-6A + S-adenosyl-L-homocysteine. It participates in cofactor biosynthesis; adenosylcobalamin biosynthesis; cob(II)yrinate a,c-diamide from sirohydrochlorin (anaerobic route): step 6/10. Its function is as follows. Catalyzes the methylation of C-1 in cobalt-precorrin-5B to form cobalt-precorrin-6A. The polypeptide is Cobalt-precorrin-5B C(1)-methyltransferase (Parasynechococcus marenigrum (strain WH8102)).